The sequence spans 1009 residues: Anillin-like protein 2 (1009 aa).

3 disordered regions span residues 1–29 (MYRRENINFSHPPQLKSPPPMSSPLDSNR), 272–295 (FGQEESVRASPMSRRNRRGTQTIV), and 539–558 (GTGYSASSSGPQFTRSPTLV). Residues 542 to 557 (YSASSSGPQFTRSPTL) show a composition bias toward polar residues. The stretch at 626-657 (SAADKINDSKRQISKLIETIEKTRKHIQLAEI) forms a coiled coil. Residues 892-1005 (DVEYRGFLYL…WLNAINDTLF (114 aa)) form the PH domain.

Localizes to the surface of the rachis.

Its function is as follows. Required to maintain the structure of the rachis, the central cytoplasmic core of the syncytial adult gonad. Failure to maintain the rachis leads to premature dissociation of oocytes and thereby impedes oogenesis. The protein is Anillin-like protein 2 (ani-2) of Caenorhabditis elegans.